The following is a 165-amino-acid chain: Protein SprT (165 aa).

The SprT-like domain maps to 20–163; the sequence is EKLAQANLKL…RCVHCGEQLV (144 aa). Histidine 78 provides a ligand contact to Zn(2+). The active site involves glutamate 79. Histidine 82 is a Zn(2+) binding site.

This sequence belongs to the SprT family. Zn(2+) serves as cofactor.

Its subcellular location is the cytoplasm. The protein is Protein SprT of Escherichia coli O127:H6 (strain E2348/69 / EPEC).